The sequence spans 455 residues: Argininosuccinate lyase (455 aa).

Belongs to the lyase 1 family. Argininosuccinate lyase subfamily.

Its subcellular location is the cytoplasm. It catalyses the reaction 2-(N(omega)-L-arginino)succinate = fumarate + L-arginine. The protein operates within amino-acid biosynthesis; L-arginine biosynthesis; L-arginine from L-ornithine and carbamoyl phosphate: step 3/3. The polypeptide is Argininosuccinate lyase (Shewanella sp. (strain ANA-3)).